Consider the following 361-residue polypeptide: S-adenosylmethionine:tRNA ribosyltransferase-isomerase (361 aa).

The protein belongs to the QueA family. Monomer.

It is found in the cytoplasm. It catalyses the reaction 7-aminomethyl-7-carbaguanosine(34) in tRNA + S-adenosyl-L-methionine = epoxyqueuosine(34) in tRNA + adenine + L-methionine + 2 H(+). It functions in the pathway tRNA modification; tRNA-queuosine biosynthesis. In terms of biological role, transfers and isomerizes the ribose moiety from AdoMet to the 7-aminomethyl group of 7-deazaguanine (preQ1-tRNA) to give epoxyqueuosine (oQ-tRNA). This Rhizobium johnstonii (strain DSM 114642 / LMG 32736 / 3841) (Rhizobium leguminosarum bv. viciae) protein is S-adenosylmethionine:tRNA ribosyltransferase-isomerase.